We begin with the raw amino-acid sequence, 409 residues long: Phospholipase ABHD3 (409 aa).

A helical; Signal-anchor for type II membrane protein membrane pass occupies residues 26-46; it reads GFFGSGVGLSLILGFSVAYAF. The region spanning 140 to 233 is the AB hydrolase-1 domain; it reads PTILLLPGLT…MLLLNYLGKI (94 aa). Active-site charge relay system residues include serine 220, aspartate 346, and histidine 375.

It belongs to the AB hydrolase superfamily. AB hydrolase 4 family.

Its subcellular location is the membrane. The enzyme catalyses a 1,2-diacyl-sn-glycero-3-phosphocholine + H2O = a 1-acyl-sn-glycero-3-phosphocholine + a fatty acid + H(+). It carries out the reaction a 1,2-diacyl-sn-glycero-3-phosphocholine + H2O = a 2-acyl-sn-glycero-3-phosphocholine + a fatty acid + H(+). The catalysed reaction is 1-tetradecanoyl-2-(9Z,12Z-octadecadienoyl)-sn-glycero-3-phosphocholine + H2O = 2-(9Z,12Z-octadecadienoyl)-sn-glycero-3-phosphocholine + tetradecanoate + H(+). It catalyses the reaction 1-tetradecanoyl-2-(9Z,12Z-octadecadienoyl)-sn-glycero-3-phosphocholine + H2O = 1-tetradecanoyl-sn-glycero-3-phosphocholine + (9Z,12Z)-octadecadienoate + H(+). The enzyme catalyses 1-tetradecanoyl-2-(5Z,8Z,11Z,14Z-eicosatetraenoyl)-sn-glycero-3-phosphocholine + H2O = 2-(5Z,8Z,11Z,14Z)-eicosatetraenoyl-sn-glycero-3-phosphocholine + tetradecanoate + H(+). It carries out the reaction 1-tetradecanoyl-2-(4Z,7Z,10Z,13Z,16Z,19Z-docosahexaenoyl)-sn-glycero-3-phosphocholine + H2O = 2-(4Z,7Z,10Z,13Z,16Z,19Z-docosahexaenoyl)-sn-glycero-3-phosphocholine + tetradecanoate + H(+). The catalysed reaction is 1,2-ditetradecanoyl-sn-glycero-3-phosphocholine + H2O = 2-tetradecanoyl-sn-glycero-3-phosphocholine + tetradecanoate + H(+). It catalyses the reaction 1-octadecanoyl-2-acetyl-sn-glycero-3-phosphocholine + H2O = 1-octadecanoyl-sn-glycero-3-phosphocholine + acetate + H(+). The enzyme catalyses 1,2-ditetradecanoyl-sn-glycero-3-phosphocholine + H2O = 1-tetradecanoyl-sn-glycero-3-phosphocholine + tetradecanoate + H(+). It carries out the reaction 1-octadecanoyl-2-pentanoyl-sn-glycero-3-phosphocholine + H2O = pentanoate + 1-octadecanoyl-sn-glycero-3-phosphocholine + H(+). The catalysed reaction is 1-octadecanoyl-2-hexanoyl-sn-glycero-3-phosphocholine + H2O = hexanoate + 1-octadecanoyl-sn-glycero-3-phosphocholine + H(+). It catalyses the reaction 1-octadecanoyl-2-octanoyl-sn-glycero-3-phosphocholine + H2O = 1-octadecanoyl-sn-glycero-3-phosphocholine + octanoate + H(+). The enzyme catalyses 1-octadecanoyl-2-nonanoyl-sn-glycero-3-phosphocholine + H2O = nonanoate + 1-octadecanoyl-sn-glycero-3-phosphocholine + H(+). It carries out the reaction 1-O-hexadecyl-2-nonadioyl-sn-glycero-3-phosphocholine + H2O = nonanedioate + 1-O-hexadecyl-sn-glycero-3-phosphocholine + H(+). The catalysed reaction is 1-hexadecanoyl-2-nonadioyl-sn-glycero-3-phosphocholine + H2O = nonanedioate + 1-hexadecanoyl-sn-glycero-3-phosphocholine + H(+). It catalyses the reaction 1-hexadecanoyl-2-(9-oxononanoyl)-sn-glycero-3-phosphocholine + H2O = 9-oxononanoate + 1-hexadecanoyl-sn-glycero-3-phosphocholine + H(+). The enzyme catalyses 1-hexadecanoyl-2-(5-oxopentanoyl)-sn-glycero-3-phosphocholine + H2O = 5-oxopentanoate + 1-hexadecanoyl-sn-glycero-3-phosphocholine + H(+). It carries out the reaction 1-hexadecanoyl-2-glutaroyl-sn-glycero-3-phosphocholine + H2O = glutarate + 1-hexadecanoyl-sn-glycero-3-phosphocholine + H(+). The catalysed reaction is 1-O-hexadecyl-2-acetyl-sn-glycero-3-phosphocholine + H2O = 1-O-hexadecyl-sn-glycero-3-phosphocholine + acetate + H(+). Phospholipase that may play a role in phospholipids remodeling. May selectively cleave myristate (C14)-containing phosphatidylcholines through its predominant phospholipase 1 activity, cleaving preferentially acyl groups in sn1 position. In parallel, may have a minor phospholipase 2 activity acting on acyl groups in position sn2. In addition to (C14)-containing phosphatidylcholines, may also act on other medium-chain-containing and oxidatively truncated phospholipids. This Homo sapiens (Human) protein is Phospholipase ABHD3.